A 166-amino-acid chain; its full sequence is Small heat shock protein OV25-2 (166 aa).

The sHSP domain occupies 38–149 (LNECNIGNSL…ASRNIPIRAS (112 aa)). The tract at residues 140-166 (ASRNIPIRASPKEPEANQKSAINDAKQ) is disordered.

The protein belongs to the small heat shock protein (HSP20) family.

In Onchocerca volvulus, this protein is Small heat shock protein OV25-2 (OV25-2).